Consider the following 348-residue polypeptide: Lipopolysaccharide heptosyltransferase 2 (348 aa).

The protein belongs to the glycosyltransferase 9 family.

It carries out the reaction an L-alpha-D-Hep-(1-&gt;5)-[alpha-Kdo-(2-&gt;4)]-alpha-Kdo-(2-&gt;6)-lipid A + ADP-L-glycero-beta-D-manno-heptose = an L-alpha-D-Hep-(1-&gt;3)-L-alpha-D-Hep-(1-&gt;5)-[alpha-Kdo-(2-&gt;4)]-alpha-Kdo-(2-&gt;6)-lipid A + ADP + H(+). The protein operates within bacterial outer membrane biogenesis; LPS core biosynthesis. Its function is as follows. Glycosyltransferase involved in the biosynthesis of the core oligosaccharide region of lipopolysaccharide (LPS). Catalyzes the addition of the second heptose unit to the heptosyl-Kdo2-lipid A module. The protein is Lipopolysaccharide heptosyltransferase 2 of Salmonella typhimurium (strain LT2 / SGSC1412 / ATCC 700720).